A 129-amino-acid chain; its full sequence is Lysozyme C (129 aa).

One can recognise a C-type lysozyme domain in the interval Lys1–Leu129. 4 disulfide bridges follow: Cys6–Cys127, Cys30–Cys115, Cys64–Cys80, and Cys76–Cys94. Residues Glu35 and Asp52 contribute to the active site.

It belongs to the glycosyl hydrolase 22 family. In terms of assembly, monomer.

The protein resides in the secreted. The catalysed reaction is Hydrolysis of (1-&gt;4)-beta-linkages between N-acetylmuramic acid and N-acetyl-D-glucosamine residues in a peptidoglycan and between N-acetyl-D-glucosamine residues in chitodextrins.. In terms of biological role, lysozymes have primarily a bacteriolytic function; those in tissues and body fluids are associated with the monocyte-macrophage system and enhance the activity of immunoagents. In Pavo cristatus (Indian peafowl), this protein is Lysozyme C (LYZ).